Reading from the N-terminus, the 194-residue chain is Histone H1.0 (194 aa).

Met1 carries the post-translational modification N-acetylmethionine. Positions 1–11 are enriched in low complexity; the sequence is MTENSTSAPAA. The disordered stretch occupies residues 1–28; sequence MTENSTSAPAAKPKRAKASKKSTDHPKY. N-acetylthreonine; in Histone H1.0, N-terminally processed is present on Thr2. Positions 24–97 constitute an H15 domain; that stretch reads DHPKYSDMIV…GASGSFRLAK (74 aa). Arg42 bears the Citrulline mark. The tract at residues 86–194 is disordered; it reads GVGASGSFRL…SSAKRASKKK (109 aa). Ser104 carries the ADP-ribosylserine modification. Residues 105 to 194 are compositionally biased toward basic residues; that stretch reads VAFKKTKKEV…SSAKRASKKK (90 aa).

The protein belongs to the histone H1/H5 family. Post-translationally, ADP-ribosylated on Ser-104 in response to DNA damage.

The protein localises to the nucleus. It localises to the chromosome. Functionally, histones H1 are necessary for the condensation of nucleosome chains into higher-order structures. The histones H1.0 are found in cells that are in terminal stages of differentiation or that have low rates of cell division. The chain is Histone H1.0 (H1-0) from Mus musculus (Mouse).